The chain runs to 291 residues: Mitochondrial citrate transporter B (291 aa).

Solcar repeat units lie at residues 10 to 97 (PQKW…IKNS), 105 to 193 (LSPA…LKES), and 201 to 283 (PTLF…MTYL). Transmembrane regions (helical) follow at residues 16 to 36 (LIAG…FEYA), 74 to 94 (STLI…YDTI), 112 to 132 (VAGV…TERI), 172 to 192 (TTLK…ILKE), 203 to 220 (LFTT…TVYA), and 255 to 276 (FWKG…VFSV).

It belongs to the mitochondrial carrier (TC 2.A.29) family.

Its subcellular location is the mitochondrion inner membrane. It catalyses the reaction citrate(in) + H(+)(in) = citrate(out) + H(+)(out). Functionally, mitochondrial transporter that mediates citrate export from mitochondria to cytoplasm. Both ctpA, ctpB, and ctpD play important roles in citric acid transport across the mitochondrial membrane and function in a redundant manner. The chain is Mitochondrial citrate transporter B from Aspergillus niger (strain ATCC 1015 / CBS 113.46 / FGSC A1144 / LSHB Ac4 / NCTC 3858a / NRRL 328 / USDA 3528.7).